The primary structure comprises 301 residues: Cell division control protein 2 homolog 1 (301 aa).

One can recognise a Protein kinase domain in the interval 5–297 (YERLQKIGEG…AAQALEHPYF (293 aa)). ATP contacts are provided by residues 11–19 (IGEGSYGVV) and Lys-34. At Ser-15 the chain carries Phosphoserine. Residue Tyr-16 is modified to Phosphotyrosine. The Proton acceptor role is filled by Asp-127. Phosphothreonine; by CAK is present on Thr-160.

It belongs to the protein kinase superfamily. CMGC Ser/Thr protein kinase family. CDC2/CDKX subfamily. Forms a stable but non-covalent complex with a regulatory subunit and with a cyclin.

It carries out the reaction L-seryl-[protein] + ATP = O-phospho-L-seryl-[protein] + ADP + H(+). The catalysed reaction is L-threonyl-[protein] + ATP = O-phospho-L-threonyl-[protein] + ADP + H(+). Its activity is regulated as follows. Phosphorylation at Ser-15 or Tyr-16 inactivates the enzyme, while phosphorylation at Thr-160 activates it. Probably involved in the control of the cell cycle. This is Cell division control protein 2 homolog 1 (CRK1) from Trypanosoma brucei brucei.